Reading from the N-terminus, the 417-residue chain is Histidine biosynthesis bifunctional protein his7 (417 aa).

The interval glycine 225–glutamine 299 is phosphoribosyl-AMP cyclohydrolase. Residues leucine 303 to arginine 387 are phosphoribosyl-ATP pyrophosphohydrolase.

The protein localises to the cytoplasm. The catalysed reaction is 1-(5-phospho-beta-D-ribosyl)-5'-AMP + H2O = 1-(5-phospho-beta-D-ribosyl)-5-[(5-phospho-beta-D-ribosylamino)methylideneamino]imidazole-4-carboxamide. It catalyses the reaction 1-(5-phospho-beta-D-ribosyl)-ATP + H2O = 1-(5-phospho-beta-D-ribosyl)-5'-AMP + diphosphate + H(+). It participates in amino-acid biosynthesis; L-histidine biosynthesis; L-histidine from 5-phospho-alpha-D-ribose 1-diphosphate: step 2/9. Its pathway is amino-acid biosynthesis; L-histidine biosynthesis; L-histidine from 5-phospho-alpha-D-ribose 1-diphosphate: step 3/9. The chain is Histidine biosynthesis bifunctional protein his7 from Schizosaccharomyces pombe (strain 972 / ATCC 24843) (Fission yeast).